We begin with the raw amino-acid sequence, 168 residues long: Mitochondrial ATP-independent inner membrane protease subunit 1a (168 aa).

Residues 1–47 constitute a mitochondrion transit peptide; it reads MRMTFLSYLKQWRGTAKEAFENVSIVAKFLCLLHVTDRYIISTTHVH. Active-site residues include S50 and K94.

This sequence belongs to the peptidase S26 family. IMP1 subfamily. As to quaternary structure, heterodimer of 2 subunits, IMP1A/B and IMP12.

It localises to the mitochondrion inner membrane. Catalyzes the removal of transit peptides required for the targeting of proteins from the mitochondrial matrix, across the inner membrane, into the inter-membrane space. In Arabidopsis thaliana (Mouse-ear cress), this protein is Mitochondrial ATP-independent inner membrane protease subunit 1a.